We begin with the raw amino-acid sequence, 224 residues long: Orotate phosphoribosyltransferase (224 aa).

Lysine 29 is a binding site for 5-phospho-alpha-D-ribose 1-diphosphate. Orotate is bound at residue 37-38 (FF). Residues 75–76 (YK), arginine 105, lysine 106, lysine 109, histidine 111, and 130–138 (DDVITAGTS) each bind 5-phospho-alpha-D-ribose 1-diphosphate. The orotate site is built by threonine 134 and arginine 162.

Belongs to the purine/pyrimidine phosphoribosyltransferase family. PyrE subfamily. Homodimer. It depends on Mg(2+) as a cofactor.

It carries out the reaction orotidine 5'-phosphate + diphosphate = orotate + 5-phospho-alpha-D-ribose 1-diphosphate. The protein operates within pyrimidine metabolism; UMP biosynthesis via de novo pathway; UMP from orotate: step 1/2. Functionally, catalyzes the transfer of a ribosyl phosphate group from 5-phosphoribose 1-diphosphate to orotate, leading to the formation of orotidine monophosphate (OMP). The protein is Orotate phosphoribosyltransferase of Bordetella pertussis (strain Tohama I / ATCC BAA-589 / NCTC 13251).